The following is a 1543-amino-acid chain: Rho guanine nucleotide exchange factor 12 (1543 aa).

Residues 1–62 form a disordered region; that stretch reads MSGTQSTITD…KTKSSSEESR (62 aa). Ser-2 is subject to N-acetylserine. Positions 28-45 are enriched in basic and acidic residues; it reads SPTDKKQKVERSSSHDFD. At Ser-41 the chain carries Phosphoserine. In terms of domain architecture, PDZ spans 72–151; sequence CVIIQKDDNG…LTVQGRPPGS (80 aa). Positions 194–262 form a coiled coil; that stretch reads VGEENNVVHN…LSKATGSAQD (69 aa). The interval 281 to 355 is disordered; it reads AEADPGDGLC…GAPHIIGAED (75 aa). Residues 293–312 are compositionally biased toward low complexity; the sequence is DWSSGDASRPSSDSADSPKS. Residue Ser-309 is modified to Phosphoserine. The segment covering 313 to 329 has biased composition (basic and acidic residues); it reads SLRERSYLEEAPERSEG. Ser-341 bears the Phosphoserine mark. An RGSL domain is found at 367–558; it reads GQCSCFQSIE…LMYMKYLGVK (192 aa). Residues 574–710 form a disordered region; that stretch reads FLPKIKQSMK…DSTPRVPTTV (137 aa). Residues 582 to 592 show a composition bias toward basic and acidic residues; it reads MKKDREGEEKG. Ser-637 carries the phosphoserine modification. A compositionally biased stretch (low complexity) spans 663 to 676; the sequence is ASSMSSATSGTALS. At Thr-736 the chain carries Phosphothreonine. In terms of domain architecture, DH spans 787–977; the sequence is KRQEVINELF…RQILNYVNQA (191 aa). The stretch at 981 to 1004 forms a coiled coil; sequence AENKQRLEDYQRRLDTSNLKLSEY. The region spanning 1019–1132 is the PH domain; sequence KMIHEGPLVW…WQDLICRMAA (114 aa). Residues 1137 to 1158 form a disordered region; it reads QSTKPIPLPQPPPCEGDNDEEE. Phosphoserine occurs at positions 1288, 1327, and 1377. 2 disordered regions span residues 1386–1405 and 1441–1468; these read EAHS…KEEK and PVTG…GPVS. A compositionally biased stretch (polar residues) spans 1450 to 1460; that stretch reads SSHQQQHSPQN. Residues Ser-1457 and Ser-1540 each carry the phosphoserine modification.

In terms of assembly, interacts with GNA12 and GNA13, probably through the RGS-like domain, with RHOA, PLXNB1 and PLXNB2, and through its PDZ domain with IGF1R beta subunit. Interacts with GCSAM. Found in a complex with ARHGEF11 and ARHGEF12; binding to ARHGEF11 and ARHGEF12 enhances CDC42 GEF activity of PLEKHG4B, and PLEKHG4B, in turn, inhibits ARHGEF11- and ARHGEF12-mediated RHOA activation. As to expression, expressed in brain, predominantly in neuronal cell bodies.

The protein localises to the cytoplasm. Its subcellular location is the membrane. In terms of biological role, may play a role in the regulation of RhoA GTPase by guanine nucleotide-binding alpha-12 (GNA12) and alpha-13 (GNA13). Acts as guanine nucleotide exchange factor (GEF) for RhoA GTPase and may act as GTPase-activating protein (GAP) for GNA12 and GNA13. The sequence is that of Rho guanine nucleotide exchange factor 12 (Arhgef12) from Mus musculus (Mouse).